Here is a 406-residue protein sequence, read N- to C-terminus: Arginine biosynthesis bifunctional protein ArgJ (406 aa).

T152, K179, T190, E277, N401, and S406 together coordinate substrate. T190 acts as the Nucleophile in catalysis.

It belongs to the ArgJ family. As to quaternary structure, heterotetramer of two alpha and two beta chains.

The protein localises to the cytoplasm. It catalyses the reaction N(2)-acetyl-L-ornithine + L-glutamate = N-acetyl-L-glutamate + L-ornithine. The enzyme catalyses L-glutamate + acetyl-CoA = N-acetyl-L-glutamate + CoA + H(+). It participates in amino-acid biosynthesis; L-arginine biosynthesis; L-ornithine and N-acetyl-L-glutamate from L-glutamate and N(2)-acetyl-L-ornithine (cyclic): step 1/1. It functions in the pathway amino-acid biosynthesis; L-arginine biosynthesis; N(2)-acetyl-L-ornithine from L-glutamate: step 1/4. In terms of biological role, catalyzes two activities which are involved in the cyclic version of arginine biosynthesis: the synthesis of N-acetylglutamate from glutamate and acetyl-CoA as the acetyl donor, and of ornithine by transacetylation between N(2)-acetylornithine and glutamate. The sequence is that of Arginine biosynthesis bifunctional protein ArgJ from Neisseria meningitidis serogroup A / serotype 4A (strain DSM 15465 / Z2491).